The following is a 606-amino-acid chain: DNA mismatch repair protein MutL (606 aa).

The interval 348–378 is disordered; that stretch reads QPHAQRPQAPWSAETSPFRPYPPAAGFSERP.

It belongs to the DNA mismatch repair MutL/HexB family.

Its function is as follows. This protein is involved in the repair of mismatches in DNA. It is required for dam-dependent methyl-directed DNA mismatch repair. May act as a 'molecular matchmaker', a protein that promotes the formation of a stable complex between two or more DNA-binding proteins in an ATP-dependent manner without itself being part of a final effector complex. This chain is DNA mismatch repair protein MutL, found in Rhizobium etli (strain CIAT 652).